Here is a 645-residue protein sequence, read N- to C-terminus: Threonine--tRNA ligase (645 aa).

A TGS domain is found at 1 to 63 (MDQIKIKFPD…ESDGDIEIVT (63 aa)). A catalytic region spans residues 242-540 (DHRKIGKELE…LTEETKGAFP (299 aa)). 3 residues coordinate Zn(2+): C336, H387, and H517.

Belongs to the class-II aminoacyl-tRNA synthetase family. Homodimer. The cofactor is Zn(2+).

It localises to the cytoplasm. The catalysed reaction is tRNA(Thr) + L-threonine + ATP = L-threonyl-tRNA(Thr) + AMP + diphosphate + H(+). Its function is as follows. Catalyzes the attachment of threonine to tRNA(Thr) in a two-step reaction: L-threonine is first activated by ATP to form Thr-AMP and then transferred to the acceptor end of tRNA(Thr). Also edits incorrectly charged L-seryl-tRNA(Thr). The protein is Threonine--tRNA ligase of Staphylococcus saprophyticus subsp. saprophyticus (strain ATCC 15305 / DSM 20229 / NCIMB 8711 / NCTC 7292 / S-41).